We begin with the raw amino-acid sequence, 205 residues long: Pyrrolidone-carboxylate peptidase (205 aa).

Catalysis depends on residues Glu-79, Cys-142, and His-165.

This sequence belongs to the peptidase C15 family. Homotetramer.

It localises to the cytoplasm. It carries out the reaction Release of an N-terminal pyroglutamyl group from a polypeptide, the second amino acid generally not being Pro.. Removes 5-oxoproline from various penultimate amino acid residues except L-proline. In Gloeobacter violaceus (strain ATCC 29082 / PCC 7421), this protein is Pyrrolidone-carboxylate peptidase.